The following is a 327-amino-acid chain: D-threonate 4-phosphate dehydrogenase (327 aa).

Substrate-binding residues include H139 and T140. Residues H169, H213, and H268 each coordinate a divalent metal cation. Residues K276, N285, and R294 each contribute to the substrate site.

It belongs to the PdxA family. PdxA2 subfamily. In terms of assembly, homodimer. A divalent metal cation serves as cofactor.

The enzyme catalyses 4-O-phospho-D-threonate + NAD(+) = dihydroxyacetone phosphate + CO2 + NADH. Functionally, catalyzes the NAD-dependent oxidation and subsequent decarboxylation of D-threonate 4-phosphate to produce dihydroxyacetone phosphate (DHAP). Can also use 4-hydroxy-L-threonine 4-phosphate as substrate. In Salmonella typhimurium (strain LT2 / SGSC1412 / ATCC 700720), this protein is D-threonate 4-phosphate dehydrogenase.